A 180-amino-acid chain; its full sequence is Inner membrane-spanning protein YciB (180 aa).

5 helical membrane-spanning segments follow: residues Gln-25–Ile-45, Val-49–Ile-69, Ile-76–Ile-96, Ile-118–Val-138, and Phe-150–Leu-170.

It belongs to the YciB family.

It localises to the cell inner membrane. Functionally, plays a role in cell envelope biogenesis, maintenance of cell envelope integrity and membrane homeostasis. The chain is Inner membrane-spanning protein YciB from Rickettsia akari (strain Hartford).